Here is a 413-residue protein sequence, read N- to C-terminus: Histidine--tRNA ligase (413 aa).

This sequence belongs to the class-II aminoacyl-tRNA synthetase family.

The protein resides in the cytoplasm. The catalysed reaction is tRNA(His) + L-histidine + ATP = L-histidyl-tRNA(His) + AMP + diphosphate + H(+). This Methanosarcina acetivorans (strain ATCC 35395 / DSM 2834 / JCM 12185 / C2A) protein is Histidine--tRNA ligase.